The chain runs to 470 residues: Iron-sulfur cluster assembly protein SufB (470 aa).

The protein belongs to the iron-sulfur cluster assembly SufBD family. Component of a complex composed of SufB, SufC and SufD in a stoichiometric ratio of 1:2:1. Interacts with SufC. Interacts with SufD.

It participates in cofactor biosynthesis; iron-sulfur cluster biosynthesis. Functionally, participates in the sulfur mobilization (SUF) pathway for iron-sulfur (Fe-S) cluster biogenesis. As part of a complex consisting of SufB-SufC(2)-SufD, involved in assembly of [4Fe-4S] clusters. Exhibits ATPase activity. This Plasmodium falciparum (isolate 3D7) protein is Iron-sulfur cluster assembly protein SufB.